Here is a 213-residue protein sequence, read N- to C-terminus: Dimethylamine corrinoid protein (213 aa).

The 90-residue stretch at 1–90 (MSKEELLQEL…LMPEGASGSK (90 aa)) folds into the B12-binding N-terminal domain. One can recognise a B12-binding domain in the interval 91-213 (LGVIVNGTVE…AVAKAKELLA (123 aa)). H104 is a binding site for methylcob(III)alamin.

Belongs to the methylamine corrinoid protein family. Copurifies with MtbA.

It participates in one-carbon metabolism; methanogenesis from dimethylamine. Acts as a methyl group carrier between MtbB1 and MtbA. Binds 1 corrinoid cofactor per protein, is subsequently demethylated by MtbA. The chain is Dimethylamine corrinoid protein from Methanosarcina barkeri.